Here is a 271-residue protein sequence, read N- to C-terminus: 5-amino-6-(5-phospho-D-ribitylamino)uracil phosphatase YbjI (271 aa).

The active-site Nucleophile is Asp9. Mg(2+) is bound at residue Asp9. Met10 contributes to the phosphate binding site. Asp11 is a Mg(2+) binding site. Residues 44 to 45 (SG) and Lys192 each bind phosphate. Residue Asp215 coordinates Mg(2+). Residue Asn218 participates in phosphate binding.

It belongs to the HAD-like hydrolase superfamily. Cof family. The cofactor is Mg(2+). Requires Mn(2+) as cofactor. Co(2+) is required as a cofactor. Zn(2+) serves as cofactor.

It carries out the reaction 5-amino-6-(5-phospho-D-ribitylamino)uracil + H2O = 5-amino-6-(D-ribitylamino)uracil + phosphate. It functions in the pathway cofactor biosynthesis; riboflavin biosynthesis; 5-amino-6-(D-ribitylamino)uracil from GTP: step 4/4. Its function is as follows. Catalyzes the dephosphorylation of 5-amino-6-(5-phospho-D-ribitylamino)uracil, and thus could be involved in the riboflavin biosynthesis pathway. Is also able to dephosphorylate flavin mononucleotide (FMN), erythrose 4-phosphate and other phosphoric acid esters. In Escherichia coli (strain K12), this protein is 5-amino-6-(5-phospho-D-ribitylamino)uracil phosphatase YbjI (ybjI).